The sequence spans 183 residues: Large ribosomal subunit protein uL5 (183 aa).

It belongs to the universal ribosomal protein uL5 family. As to quaternary structure, part of the 50S ribosomal subunit; part of the 5S rRNA/L5/L18/L25 subcomplex. Contacts the 5S rRNA and the P site tRNA. Forms a bridge to the 30S subunit in the 70S ribosome.

Its function is as follows. This is one of the proteins that bind and probably mediate the attachment of the 5S RNA into the large ribosomal subunit, where it forms part of the central protuberance. In the 70S ribosome it contacts protein S13 of the 30S subunit (bridge B1b), connecting the 2 subunits; this bridge is implicated in subunit movement. Contacts the P site tRNA; the 5S rRNA and some of its associated proteins might help stabilize positioning of ribosome-bound tRNAs. This chain is Large ribosomal subunit protein uL5, found in Leptospira biflexa serovar Patoc (strain Patoc 1 / Ames).